Here is a 462-residue protein sequence, read N- to C-terminus: Argininosuccinate lyase (462 aa).

It belongs to the lyase 1 family. Argininosuccinate lyase subfamily.

Its subcellular location is the cytoplasm. The catalysed reaction is 2-(N(omega)-L-arginino)succinate = fumarate + L-arginine. Its pathway is amino-acid biosynthesis; L-arginine biosynthesis; L-arginine from L-ornithine and carbamoyl phosphate: step 3/3. This is Argininosuccinate lyase from Prochlorococcus marinus (strain SARG / CCMP1375 / SS120).